Reading from the N-terminus, the 333-residue chain is tRNA N6-adenosine threonylcarbamoyltransferase (333 aa).

The Fe cation site is built by His118 and His122. Substrate-binding positions include 140-144 (VVSGG), Asp173, Gly186, and Asn274. A Fe cation-binding site is contributed by Asp298.

This sequence belongs to the KAE1 / TsaD family. The cofactor is Fe(2+).

Its subcellular location is the cytoplasm. The catalysed reaction is L-threonylcarbamoyladenylate + adenosine(37) in tRNA = N(6)-L-threonylcarbamoyladenosine(37) in tRNA + AMP + H(+). Required for the formation of a threonylcarbamoyl group on adenosine at position 37 (t(6)A37) in tRNAs that read codons beginning with adenine. Is involved in the transfer of the threonylcarbamoyl moiety of threonylcarbamoyl-AMP (TC-AMP) to the N6 group of A37, together with TsaE and TsaB. TsaD likely plays a direct catalytic role in this reaction. The protein is tRNA N6-adenosine threonylcarbamoyltransferase of Deinococcus geothermalis (strain DSM 11300 / CIP 105573 / AG-3a).